The following is a 143-amino-acid chain: Crossover junction endodeoxyribonuclease Hjc (143 aa).

Glu-12 contributes to the Mg(2+) binding site. Ser-32 is an active-site residue. Residues Asp-42 and Glu-55 each coordinate Mg(2+).

The protein belongs to the Holliday junction resolvase Hjc family. In terms of assembly, homodimer. Mg(2+) serves as cofactor.

The enzyme catalyses Endonucleolytic cleavage at a junction such as a reciprocal single-stranded crossover between two homologous DNA duplexes (Holliday junction).. In terms of biological role, a structure-specific endonuclease that resolves Holliday junction (HJ) intermediates during genetic recombination. Cleaves 4-way DNA junctions introducing paired nicks in opposing strands, leaving a 5'-terminal phosphate and a 3'-terminal hydroxyl group that are subsequently ligated to produce recombinant products. Functionally, hjc, Hjm (Hel308) and PINA coordinate HJ migration and cleavage of replication forks in a coordinated way. This is Crossover junction endodeoxyribonuclease Hjc from Saccharolobus islandicus (strain REY15A) (Sulfolobus islandicus).